Reading from the N-terminus, the 291-residue chain is RPE-retinal G protein-coupled receptor (291 aa).

Residues 1–15 (MAESGTLPTGFGELE) lie on the Extracellular side of the membrane. A helical membrane pass occupies residues 16 to 36 (VLAVGTVLLVEALSGLSLNIL). The Cytoplasmic segment spans residues 37–52 (TILSFCKTPELRTPSH). Residues 53 to 73 (LLVLSLALADSGISLNALVAA) form a helical membrane-spanning segment. Residues 74 to 91 (TSSLLRRWPYGSEGCQAH) are Extracellular-facing. Cys88 and Cys162 are oxidised to a cystine. A helical transmembrane segment spans residues 92–112 (GFQGFVTALASICSSAAVAWG). Residues 113–130 (RYHHFCTRSRLDWNTAVS) lie on the Cytoplasmic side of the membrane. The helical transmembrane segment at 131 to 151 (LVFFVWLSSAFWAALPLLGWG) threads the bilayer. Topologically, residues 152–175 (HYDYEPLGTCCTLDYSRGDRNFTS) are extracellular. Asn172 is a glycosylation site (N-linked (GlcNAc...) asparagine). Residues 176 to 196 (FLFTMAFFNFLLPLFITVVSY) traverse the membrane as a helical segment. At 197-219 (RLMEQKLGKTSRPPVNTVLPART) the chain is on the cytoplasmic side. A helical membrane pass occupies residues 220–240 (LLLGWGPYALLYLYATIADAT). The Extracellular segment spans residues 241–247 (SISPKLQ). A helical transmembrane segment spans residues 248-268 (MVPALIAKAVPTVNAMNYALG). N6-(retinylidene)lysine is present on Lys255. Over 269 to 291 (SEMVHRGIWQCLSPQRREHSREQ) the chain is Cytoplasmic.

This sequence belongs to the G-protein coupled receptor 1 family. Opsin subfamily. Covalently binds all-trans- and 11-cis-retinal. Preferentially expressed at high levels in the retinal pigment epithelium (RPE) and Mueller cells of the neural retina.

It is found in the membrane. Functionally, receptor for all-trans- and 11-cis-retinal. Binds preferentially to the former and may catalyze the isomerization of the chromophore by a retinochrome-like mechanism. This Bos taurus (Bovine) protein is RPE-retinal G protein-coupled receptor (RGR).